Reading from the N-terminus, the 357-residue chain is Snake venom metalloproteinase H4 (357 aa).

The first 6 residues, 1 to 6 (FPYQGS), serve as a signal peptide directing secretion. Positions 7–176 (SIMLESGKVN…KKASQLIVST (170 aa)) are excised as a propeptide. A Peptidase M12B domain is found at 180-357 (RYMEIVIVVD…EVIKYFLDSK (178 aa)). Position 316 (H316) interacts with Zn(2+). E317 is an active-site residue. Residues H320 and H326 each contribute to the Zn(2+) site. The cysteines at positions 333 and 339 are disulfide-linked.

It belongs to the venom metalloproteinase (M12B) family. P-I subfamily. In terms of assembly, monomer. Requires Zn(2+) as cofactor. Expressed by the venom gland.

It is found in the secreted. Snake venom metalloproteinase that impairs hemostasis in the envenomed animal. This Deinagkistrodon acutus (Hundred-pace snake) protein is Snake venom metalloproteinase H4.